A 572-amino-acid polypeptide reads, in one-letter code: MESLCGVLVFLLLAAGLPLQAAKRFRDVLGHEQYPDHMRENNQLRGWSSDENEWDEQLYPVWRRGEGRWKDSWEGGRVQAALTSDSPALVGSNITFVVNLVFPRCQKEDANGNIVYERNCRSDLELASDPYVYNWTTGADDEDWEDSTSQGQHLRFPDGKPFPRPHGRKKWNFVYVFHTLGQYFQKLGRCSARVSINTVNLTVGPQVMEVIVFRRHGRAYIPISKVKDVYVITDQIPIFVTMYQKNDRNSSDETFLRDLPIFFDVLIHDPSHFLNYSAISYKWNFGDNTGLFVSNNHTLNHTYVLNGTFNFNLTVQTAVPGPCPSPTPSPSSSTSPSPASSPSPTLSTPSPSLMPTGHKSMELSDISNENCRINRYGYFRATITIVDGILEVNIIQVADVPIPTPQPDNSLMDFIVTCKGATPTEACTIISDPTCQIAQNRVCSPVAVDELCLLSVRRAFNGSGTYCVNFTLGDDASLALTSALISIPGKDLGSPLRTVNGVLISIGCLAMFVTMVTILLYKKHKTYKPIGNCTRNVVKGKGLSVFLSHAKAPFSRGDREKDPLLQDKPWML.

The first 22 residues, 1–22 (MESLCGVLVFLLLAAGLPLQAA), serve as a signal peptide directing secretion. The Extracellular segment spans residues 23–500 (KRFRDVLGHE…DLGSPLRTVN (478 aa)). N-linked (GlcNAc...) asparagine glycosylation is found at Asn93, Asn134, Asn200, Asn249, Asn275, Asn296, Asn300, Asn306, and Asn312. Residues 251–338 (SDETFLRDLP…SPSSSTSPSP (88 aa)) enclose the PKD domain. Residues 321-359 (GPCPSPTPSPSSSTSPSPASSPSPTLSTPSPSLMPTGHK) are disordered. Residues 330 to 356 (PSSSTSPSPASSPSPTLSTPSPSLMPT) show a composition bias toward low complexity. N-linked (GlcNAc...) asparagine glycosylation is found at Asn461 and Asn469. The chain crosses the membrane as a helical span at residues 501-521 (GVLISIGCLAMFVTMVTILLY). Residues 522 to 572 (KKHKTYKPIGNCTRNVVKGKGLSVFLSHAKAPFSRGDREKDPLLQDKPWML) are Cytoplasmic-facing. Position 544 is a phosphoserine (Ser544). Residues 556–558 (RGD) carry the Cell attachment site motif.

The protein belongs to the PMEL/NMB family.

The protein resides in the cell membrane. The protein localises to the melanosome membrane. It is found in the early endosome membrane. Its function is as follows. Could be a melanogenic enzyme. The protein is Transmembrane glycoprotein NMB (Gpnmb) of Rattus norvegicus (Rat).